A 234-amino-acid polypeptide reads, in one-letter code: Uridylate kinase (234 aa).

9-12 (KLSG) contacts ATP. Glycine 51 contacts UMP. Positions 52 and 56 each coordinate ATP. Residues aspartate 71 and 132–139 (CGNPFFTT) contribute to the UMP site. Positions 159, 165, and 168 each coordinate ATP.

The protein belongs to the UMP kinase family. Homohexamer.

The protein localises to the cytoplasm. It carries out the reaction UMP + ATP = UDP + ADP. Its pathway is pyrimidine metabolism; CTP biosynthesis via de novo pathway; UDP from UMP (UMPK route): step 1/1. Inhibited by UTP. In terms of biological role, catalyzes the reversible phosphorylation of UMP to UDP. This Prochlorococcus marinus (strain MIT 9301) protein is Uridylate kinase.